A 541-amino-acid polypeptide reads, in one-letter code: Chaperonin GroEL (541 aa).

Residues 29–32, 86–90, glycine 413, 476–478, and aspartate 492 contribute to the ATP site; these read TLGP, DGTTT, and NAA.

This sequence belongs to the chaperonin (HSP60) family. As to quaternary structure, forms a cylinder of 14 subunits composed of two heptameric rings stacked back-to-back. Interacts with the co-chaperonin GroES.

Its subcellular location is the cytoplasm. It catalyses the reaction ATP + H2O + a folded polypeptide = ADP + phosphate + an unfolded polypeptide.. Together with its co-chaperonin GroES, plays an essential role in assisting protein folding. The GroEL-GroES system forms a nano-cage that allows encapsulation of the non-native substrate proteins and provides a physical environment optimized to promote and accelerate protein folding. This is Chaperonin GroEL from Streptococcus equi subsp. equi (strain 4047).